Here is a 284-residue protein sequence, read N- to C-terminus: Bifunctional protein FolD (284 aa).

NADP(+) contacts are provided by residues 165 to 167 (GRS) and Ser190.

The protein belongs to the tetrahydrofolate dehydrogenase/cyclohydrolase family. In terms of assembly, homodimer.

The catalysed reaction is (6R)-5,10-methylene-5,6,7,8-tetrahydrofolate + NADP(+) = (6R)-5,10-methenyltetrahydrofolate + NADPH. It catalyses the reaction (6R)-5,10-methenyltetrahydrofolate + H2O = (6R)-10-formyltetrahydrofolate + H(+). It functions in the pathway one-carbon metabolism; tetrahydrofolate interconversion. Its function is as follows. Catalyzes the oxidation of 5,10-methylenetetrahydrofolate to 5,10-methenyltetrahydrofolate and then the hydrolysis of 5,10-methenyltetrahydrofolate to 10-formyltetrahydrofolate. In Streptococcus equi subsp. zooepidemicus (strain H70), this protein is Bifunctional protein FolD.